A 162-amino-acid chain; its full sequence is MKRVVYPGTFDPITNGHIDLVQRASKLFDSVVIAVAASNRKGPLFTLEERVSLAQKALSHLSNIEVCGFDCLLKDLVEEKQAYGVVRGLRAVSDFEYEFQLANMNRALAPSMESLFLTPAEHLSYISSSLVKEIASLGGDVSKFVPKLVQSALTDKYNELKA.

Thr-9 contributes to the substrate binding site. ATP is bound by residues Thr-9–Phe-10 and His-17. Lys-41, Leu-73, and Arg-87 together coordinate substrate. ATP-binding positions include Gly-88–Arg-90, Glu-98, and Leu-123–Ser-129.

It belongs to the bacterial CoaD family. Homohexamer. It depends on Mg(2+) as a cofactor.

It is found in the cytoplasm. It carries out the reaction (R)-4'-phosphopantetheine + ATP + H(+) = 3'-dephospho-CoA + diphosphate. Its pathway is cofactor biosynthesis; coenzyme A biosynthesis; CoA from (R)-pantothenate: step 4/5. Its function is as follows. Reversibly transfers an adenylyl group from ATP to 4'-phosphopantetheine, yielding dephospho-CoA (dPCoA) and pyrophosphate. This Teredinibacter turnerae (strain ATCC 39867 / T7901) protein is Phosphopantetheine adenylyltransferase.